A 61-amino-acid polypeptide reads, in one-letter code: Large ribosomal subunit protein eL24 (61 aa).

Residues Cys-7, Cys-10, Cys-33, and Cys-37 each coordinate Zn(2+). The segment at 7–37 (CTYCGRSIEPGTGLMYVKNDGSVLWFCSSKC) adopts a C4-type zinc-finger fold.

It belongs to the eukaryotic ribosomal protein eL24 family. Part of the 50S ribosomal subunit. Forms a cluster with proteins L3 and L14. Zn(2+) serves as cofactor.

Functionally, binds to the 23S rRNA. The polypeptide is Large ribosomal subunit protein eL24 (Hyperthermus butylicus (strain DSM 5456 / JCM 9403 / PLM1-5)).